Consider the following 715-residue polypeptide: 1,4-alpha-glucan branching enzyme GlgB (715 aa).

Asp-396 serves as the catalytic Nucleophile. Catalysis depends on Glu-449, which acts as the Proton donor.

Belongs to the glycosyl hydrolase 13 family. GlgB subfamily. In terms of assembly, monomer.

It carries out the reaction Transfers a segment of a (1-&gt;4)-alpha-D-glucan chain to a primary hydroxy group in a similar glucan chain.. Its pathway is glycan biosynthesis; glycogen biosynthesis. Catalyzes the formation of the alpha-1,6-glucosidic linkages in glycogen by scission of a 1,4-alpha-linked oligosaccharide from growing alpha-1,4-glucan chains and the subsequent attachment of the oligosaccharide to the alpha-1,6 position. The polypeptide is 1,4-alpha-glucan branching enzyme GlgB (Aliivibrio fischeri (strain ATCC 700601 / ES114) (Vibrio fischeri)).